Reading from the N-terminus, the 173-residue chain is Translation initiation factor IF-3 (173 aa).

It belongs to the IF-3 family. In terms of assembly, monomer.

The protein resides in the cytoplasm. IF-3 binds to the 30S ribosomal subunit and shifts the equilibrium between 70S ribosomes and their 50S and 30S subunits in favor of the free subunits, thus enhancing the availability of 30S subunits on which protein synthesis initiation begins. The protein is Translation initiation factor IF-3 of Caulobacter vibrioides (strain ATCC 19089 / CIP 103742 / CB 15) (Caulobacter crescentus).